We begin with the raw amino-acid sequence, 261 residues long: Carnitinyl-CoA dehydratase (261 aa).

E111 serves as the catalytic Nucleophile. E131 acts as the Proton acceptor in catalysis.

The protein belongs to the enoyl-CoA hydratase/isomerase family.

The enzyme catalyses (R)-carnitinyl-CoA = crotonobetainyl-CoA + H2O. It participates in amine and polyamine metabolism; carnitine metabolism. In terms of biological role, catalyzes the reversible dehydration of L-carnitinyl-CoA to crotonobetainyl-CoA. The polypeptide is Carnitinyl-CoA dehydratase (Salmonella paratyphi C (strain RKS4594)).